The primary structure comprises 1509 residues: Putative endo-alpha-N-acetylgalactosaminidase (1509 aa).

An N-terminal signal peptide occupies residues Met1–Ala41. Ca(2+) contacts are provided by Asp288, Asn290, Asp292, Lys294, and Asp299. A catalytic region spans residues Gly313 to Gln585. Residue Asp369 coordinates substrate. Asp472 (nucleophile) is an active-site residue. The Proton donor/acceptor role is filled by Glu498. Residues Asn878, Glu880, Asp926, and Tyr929 each coordinate Ca(2+). Disordered stretches follow at residues Asn1176–Pro1197 and Ile1403–Gly1439. The span at Asn1407–Thr1428 shows a compositional bias: low complexity. Over residues Gly1429–Gly1439 the composition is skewed to gly residues. The short motif at Leu1475–Gly1479 is the LPXTG sorting signal element. Position 1478 is a pentaglycyl murein peptidoglycan amidated threonine (Thr1478). A propeptide spans Gly1479–Ser1509 (removed by sortase).

It belongs to the glycosyl hydrolase 101 family. A subfamily.

The protein localises to the secreted. The protein resides in the cell wall. It catalyses the reaction a 3-O-[beta-D-galactosyl-(1-&gt;3)-N-acetyl-alpha-D-galactosaminyl]-L-threonyl-[protein] + H2O = beta-D-galactosyl-(1-&gt;3)-N-acetyl-D-galactosamine + L-threonyl-[protein]. It carries out the reaction a 3-O-[beta-D-galactosyl-(1-&gt;3)-N-acetyl-alpha-D-galactosaminyl]-L-seryl-[protein] + H2O = beta-D-galactosyl-(1-&gt;3)-N-acetyl-D-galactosamine + L-seryl-[protein]. In terms of biological role, probably involved in the breakdown of mucin-type O-linked glycans. Specifically removes the T-antigen disaccharide (Gal-beta-1,3-GalNAc-alpha) from extracellular host glycoproteins. In Renibacterium salmoninarum (strain ATCC 33209 / DSM 20767 / JCM 11484 / NBRC 15589 / NCIMB 2235), this protein is Putative endo-alpha-N-acetylgalactosaminidase.